A 178-amino-acid polypeptide reads, in one-letter code: FXYD domain-containing ion transport regulator 5 (178 aa).

The signal sequence occupies residues 1–21 (MSLSSRLCLLTIVALILPSRG). Positions 21–59 (GQTPKKPTSIFTADQTSATTRDNVPDPDQTSPGVQTTPL) are enriched in polar residues. Residues 21–130 (GQTPKKPTSI…SYIEHPLDSN (110 aa)) form a disordered region. Topologically, residues 22–145 (QTPKKPTSIF…YYDDTTLRKR (124 aa)) are extracellular. Positions 67–79 (TGSQTAAQTETQQ) are enriched in low complexity. Residues 80-100 (LTKMATSNPVSDPGPHTSSKK) show a composition bias toward polar residues. The chain crosses the membrane as a helical span at residues 146-166 (GLLVAAVLFITGIIILTSGKC). Over 167-178 (RQLSQFCLNRHR) the chain is Cytoplasmic.

The protein belongs to the FXYD family. Regulatory subunit of the sodium/potassium-transporting ATPase which is composed of a catalytic alpha subunit, a non-catalytic beta subunit and an additional regulatory subunit. The regulatory subunit, a member of the FXYD protein family, modulates the enzymatic activity in a tissue- and isoform-specific way by changing affinities of the Na+/K+-ATPase toward Na(+), K(+) or ATP. Post-translationally, glycosylated. As to expression, expressed mainly in epithelial tissue, such as lung, intestine and kidney. Not detected in brain, liver, muscle, and heart.

It localises to the cell membrane. Its subcellular location is the basolateral cell membrane. Functionally, associates with and regulates the activity of the sodium/potassium-transporting ATPase (NKA) which catalyzes the hydrolysis of ATP coupled with the exchange of Na(+) and K(+) ions across the plasma membrane. May increase NKA activity by increasing the apparent affinity for Na(+). Involved in down-regulation of E-cadherin which results in reduced cell adhesion. Promotes metastasis. The sequence is that of FXYD domain-containing ion transport regulator 5 (Fxyd5) from Mus musculus (Mouse).